Reading from the N-terminus, the 115-residue chain is Ribosome-binding factor A (115 aa).

Belongs to the RbfA family. As to quaternary structure, monomer. Binds 30S ribosomal subunits, but not 50S ribosomal subunits or 70S ribosomes.

The protein resides in the cytoplasm. In terms of biological role, one of several proteins that assist in the late maturation steps of the functional core of the 30S ribosomal subunit. Associates with free 30S ribosomal subunits (but not with 30S subunits that are part of 70S ribosomes or polysomes). Required for efficient processing of 16S rRNA. May interact with the 5'-terminal helix region of 16S rRNA. The sequence is that of Ribosome-binding factor A from Bacillus velezensis (strain DSM 23117 / BGSC 10A6 / LMG 26770 / FZB42) (Bacillus amyloliquefaciens subsp. plantarum).